A 434-amino-acid chain; its full sequence is Histidinol dehydrogenase (434 aa).

Residues Tyr130, Gln188, and Asn211 each contribute to the NAD(+) site. Positions 237, 259, and 262 each coordinate substrate. Gln259 and His262 together coordinate Zn(2+). Catalysis depends on proton acceptor residues Glu326 and His327. Residues His327, Asp360, Glu414, and His419 each coordinate substrate. Asp360 contacts Zn(2+). Residue His419 coordinates Zn(2+).

It belongs to the histidinol dehydrogenase family. In terms of assembly, homodimer. The cofactor is Zn(2+). Mn(2+) serves as cofactor.

The catalysed reaction is L-histidinol + 2 NAD(+) + H2O = L-histidine + 2 NADH + 3 H(+). It participates in amino-acid biosynthesis; L-histidine biosynthesis; L-histidine from 5-phospho-alpha-D-ribose 1-diphosphate: step 9/9. Activity is lost when the metal is removed through urea denaturation or chelation, and can be regained by addition of metal. Catalyzes the sequential NAD-dependent oxidations of L-histidinol to L-histidinaldehyde and then to L-histidine. This Salmonella typhimurium (strain LT2 / SGSC1412 / ATCC 700720) protein is Histidinol dehydrogenase (hisD).